Reading from the N-terminus, the 141-residue chain is Transcriptional regulator MraZ (141 aa).

SpoVT-AbrB domains are found at residues 5–47 and 76–119; these read EFEH…PAER and AAEC…GAEH.

This sequence belongs to the MraZ family. Forms oligomers.

Its subcellular location is the cytoplasm. The protein localises to the nucleoid. The protein is Transcriptional regulator MraZ of Lactiplantibacillus plantarum (strain ATCC BAA-793 / NCIMB 8826 / WCFS1) (Lactobacillus plantarum).